We begin with the raw amino-acid sequence, 434 residues long: Alpha-enolase (434 aa).

Residue S40 participates in Mg(2+) binding. 2 residues coordinate substrate: H158 and E167. The active-site Proton donor is E210. Mg(2+) is bound by residues D245, E293, and D318. Substrate contacts are provided by E293 and D318. Residue K343 is the Proton acceptor of the active site. Residues 370-373 (SHRS) and K394 contribute to the substrate site.

The protein belongs to the enolase family. In terms of assembly, homodimer. It depends on Mg(2+) as a cofactor.

The protein localises to the cytoplasm. It carries out the reaction (2R)-2-phosphoglycerate = phosphoenolpyruvate + H2O. The protein operates within carbohydrate degradation; glycolysis; pyruvate from D-glyceraldehyde 3-phosphate: step 4/5. The protein is Alpha-enolase (eno1) of Xenopus laevis (African clawed frog).